A 286-amino-acid polypeptide reads, in one-letter code: ATP synthase gamma chain (286 aa).

Belongs to the ATPase gamma chain family. F-type ATPases have 2 components, CF(1) - the catalytic core - and CF(0) - the membrane proton channel. CF(1) has five subunits: alpha(3), beta(3), gamma(1), delta(1), epsilon(1). CF(0) has three main subunits: a, b and c.

It localises to the cell inner membrane. In terms of biological role, produces ATP from ADP in the presence of a proton gradient across the membrane. The gamma chain is believed to be important in regulating ATPase activity and the flow of protons through the CF(0) complex. This is ATP synthase gamma chain from Pseudomonas putida (strain ATCC 700007 / DSM 6899 / JCM 31910 / BCRC 17059 / LMG 24140 / F1).